Here is a 24-residue protein sequence, read N- to C-terminus: Neurotoxin-2 (24 aa).

The region spanning 1–24 (EDGYLLNRDTGCKVSCGTCRYCND) is the LCN-type CS-alpha/beta domain.

This sequence belongs to the long (4 C-C) scorpion toxin superfamily. Sodium channel inhibitor family. Alpha subfamily. Expressed by the venom gland.

It localises to the secreted. Binds to sodium channels (Nav) and inhibits the inactivation of the activated channels, thereby blocking neuronal transmission. This toxin is active against mammals. The chain is Neurotoxin-2 from Hottentotta tamulus (Eastern Indian scorpion).